We begin with the raw amino-acid sequence, 2298 residues long: MKGHQFKSWIFELREILREIKNSHYFLDSWTQFNSVGSFIHIFFHQERFIKLLDPRIWSILLSRNSQGSTSNRYFTIKGVVLFVVAVLIYRINNRNMVERKNLYLTGLLPIPMNSIGPRNDTLEESFGSSNINRLIVSLLYLPKGKKISESSFLDPKESTWVLPITKKCIMPESNWSSRWWRNWIGKKRDSSRKISNETVAGIDISFKEKDIKYLEFLFVYYMDDPIRKGHDWELFDRLSPSKRRNIINLNSGQLFEILVKDWICYLMFAFREKIPIEVEGFFKQQGAGSTIQSNDIEHVSHLFSRNKWAISLQNCAQFHMWQFRQDLFVSWGKNPHESDFLRNISRENWIWLDNVWLVNKDRFFSKVRNVSSNIQYDSTRSSFVQVTDSSQLKGSSDQFRDHFDSISNEDSEYHTLINQREIQQLKERSILWDPSFLQTERTEIESDQFPKCLSGYSSMPRLFTEREKRMNNHLLPEEIEEFLGNPTRPIRSFFSDRWSELHLGSNPTERSTRDQKLLKKEQDVSFVPSRRSENKEIVNIFKIITYLQNTVSIHPISSDLGCDMVPKDELDMDSSNKISFLNKNPFFDLFHLFHDRNRGGSTLHHDFESEERFQEMADLFTLSITEPDLVYHKGFAFSIDSYGLDQKQFLNEVFNSRDESKKKSLLVLPPIFYEENESFYRRIRKKWVRISCGNDLEDPKPKRVVFASNNIMEAVNQYRLIRNLIQIQYSTYGYIRNVLNRFFLMNRSDRNFEYGIQRDQIGNDTLNHRTIMKYTINQHLSNLKKSQKKWFDPLIFLSRTERSINRDPNAYRYKWSNGSKNFQEHLEHFVSEQKSRFQVVFDRLRINQYSIDWSEVIDKKDLSKSLRFFLSKLLLFLSKLLLFLSNSLPFFFVSFENIPIHRSEIHIYELKGPNDQLCNQLLESIGLQIVHLKKLKPFLLDDHNTSQKSKFLINGGTISPFLFNKIPKWMIDSFHTRKNRRKSFDNTDSYFSMISHDQDNWLNPVKPFHRSSLISSFYKANRLRFLNNPHHFCFYCNKRFPFYVEKARINNYDFTYGQFLNILFIRNKIFSLCGGKKKHAFLERDTISPSPIESQVSNIFISNDFPQSGDERYNLYKSFHFAIRSDPLVRRAIYSIADISGTPLTEGQIVNFERTYCQPLSDMNLSDSEEKNLHQYLNFNSNMGLIHTPCSEKYLPSEKRKKRSLCLKKCVEKGQMDRTFQRDSAFSTLSKWNLVQTYMPWFLTSTGYKYLNLIFLDTFSDLLPILSSSQKFVSIFHDIMHGSDISWRILQKKWCLPQWNLISEISSKCLHNLLLSEEMIHRNNESPLISTHLRSPNVREFLYSILFLLLVAGYLVRTHLLFVSRAYSELQTEFEKVKSLMIPSYMIELRKLLDRYPTSELNSFWLKNLFLVALEQLGDSLEEIRGSGGNMLWGSDPAYGVKSIRSKKKYLNINFIDIIDLISIIPNPINRITFSRNTRHLSHTSKEIYSLIRKRKNVSGDWIDDKIESWVANSDSIDDKEREFLVQFSTLTAEKRIDQILLSLTHSDHLSKNDSGYQMIEQPGTIYLRYLVDIHKKYLMNYEFNTSCLVERRIFLAHYQTITYSQTSCGANSFHFPSHGKPFSLRLALSPSRGILVIGSIGTGRSYLVKYLATNSYVPFITVFLNKFLDNKPKGFFIDDIDIDASDDIDASDDIDASNDIDDSDDIDRELDTELELLTMMNALTMDMMSEIDRFYITLQFELAKAMSPCIIWIPNIHDLDVNESNYLSLGLLVNSLSRDCERCSTRNILVIASTHIPKKVDPALIAPNKLNTCIKIRRLLIPQQRKHFFTLSYTRGFHLEKKMFHTNGFESITMGSNARDLVALTNEALSISITQKKSIIDTNTIRSALHRQTWDLRSQVRSVQDHGILFYQIGRAVAQNVLLSNCPIDPISIYMKKKSCNEGDSYLYKWYFELGTSMKKLTILLYLLSCSAGSVAQDLWSLPGPDEKNGITSYGFVENDSDLVHGLLEVEGALVGSSRTEKDCSQFDNDRVTLLLRSEPRNPLYMMQNGSCSIVDQRFLYEKYESEFEEGEGEGVLDPQQIEEDLFNHIVWAPRIWRPWGFLFDCIERPNELGFPYWARSFRGKRIIYDEKDELQANDSEFLQSGTVQYQTRDRSSKEQGFFRISQFIWDPADPLFFLFKDQPFVSVFSHREFFADEEMSKGLLTSQTDPPTSIYKRWFIKNTQEKHFELLIHRQRWLRTNSSLSNGFFRSNTPSESYQYLSNLFLSNGTLLDQMTKTLLRKRWLFPDEMKIGFM.

1640-1647 contacts ATP; that stretch reads GSIGTGRS.

This sequence belongs to the Ycf2 family.

The protein resides in the plastid. It is found in the chloroplast stroma. In terms of biological role, probable ATPase of unknown function. Its presence in a non-photosynthetic plant (Epifagus virginiana) and experiments in tobacco indicate that it has an essential function which is probably not related to photosynthesis. The sequence is that of Protein Ycf2 from Carica papaya (Papaya).